Here is a 284-residue protein sequence, read N- to C-terminus: Bifunctional protein FolD (284 aa).

NADP(+) contacts are provided by residues 166-168 (GAS) and Ile232.

The protein belongs to the tetrahydrofolate dehydrogenase/cyclohydrolase family. As to quaternary structure, homodimer.

It carries out the reaction (6R)-5,10-methylene-5,6,7,8-tetrahydrofolate + NADP(+) = (6R)-5,10-methenyltetrahydrofolate + NADPH. The enzyme catalyses (6R)-5,10-methenyltetrahydrofolate + H2O = (6R)-10-formyltetrahydrofolate + H(+). The protein operates within one-carbon metabolism; tetrahydrofolate interconversion. Functionally, catalyzes the oxidation of 5,10-methylenetetrahydrofolate to 5,10-methenyltetrahydrofolate and then the hydrolysis of 5,10-methenyltetrahydrofolate to 10-formyltetrahydrofolate. This is Bifunctional protein FolD from Pseudoalteromonas translucida (strain TAC 125).